A 126-amino-acid chain; its full sequence is Small ribosomal subunit protein uS13 (126 aa).

Residues 92 to 126 (HRRGLPVRGQRTKTNARTRKGPKKTVAGKKKATRK) form a disordered region.

Belongs to the universal ribosomal protein uS13 family. As to quaternary structure, part of the 30S ribosomal subunit. Forms a loose heterodimer with protein S19. Forms two bridges to the 50S subunit in the 70S ribosome.

Located at the top of the head of the 30S subunit, it contacts several helices of the 16S rRNA. In the 70S ribosome it contacts the 23S rRNA (bridge B1a) and protein L5 of the 50S subunit (bridge B1b), connecting the 2 subunits; these bridges are implicated in subunit movement. Contacts the tRNAs in the A and P-sites. The sequence is that of Small ribosomal subunit protein uS13 from Deinococcus radiodurans (strain ATCC 13939 / DSM 20539 / JCM 16871 / CCUG 27074 / LMG 4051 / NBRC 15346 / NCIMB 9279 / VKM B-1422 / R1).